The chain runs to 128 residues: MAAMTTETTMTRIQLGAMGEALAVDHLTRMGLRVLHRNWRCRYGELDIIACDDATSTVVFVEVKTRTGDGYGGLPQAVTPRKVRRLRRLAGLWLAGQDRRWAAIRIDVIGVRVGRRRTPEITHLQGIG.

This sequence belongs to the UPF0102 family.

The polypeptide is UPF0102 protein MAV_3752 (Mycobacterium avium (strain 104)).